A 261-amino-acid polypeptide reads, in one-letter code: 14-3-3-like protein A (261 aa).

This sequence belongs to the 14-3-3 family.

This is 14-3-3-like protein A from Vicia faba (Broad bean).